We begin with the raw amino-acid sequence, 464 residues long: Keratin, type I cytoskeletal 28 (464 aa).

The interval 1-85 (MSLRFSSGSR…GSEGGLFSGN (85 aa)) is head. Residues 86–121 (EKVTMQNLNDRLASYLDNVRALEEANAELERKIKSW) form a coil 1A region. One can recognise an IF rod domain in the interval 86 to 401 (EKVTMQNLND…RLIDGDRNSC (316 aa)). Residues 122 to 143 (YEKHGPGSCHGLDHDYSRYHLT) are linker 1. A coil 1B region spans residues 144 to 235 (IEDLKNKIIS…KNHEEEVKAL (92 aa)). The linker 12 stretch occupies residues 236 to 258 (QCVAGGNVNVEMNAAPGVDLTLL). The coil 2 stretch occupies residues 259–397 (LNNMRAEYED…ETYCRLIDGD (139 aa)). The interval 398–464 (RNSCSKSKGF…NGKTKQRVPF (67 aa)) is tail. Low complexity predominate over residues 402 to 417 (SKSKGFGSGSPGNSSK). Disordered regions lie at residues 402-422 (SKSK…LSRT) and 440-464 (SSRV…RVPF).

The protein belongs to the intermediate filament family. As to quaternary structure, heterotetramer of two type I and two type II keratins.

It is found in the cytoplasm. In terms of biological role, essential for the proper assembly of types I and II keratin protein complexes and the formation of keratin intermediate filaments in the inner root sheath (irs). The sequence is that of Keratin, type I cytoskeletal 28 from Bos taurus (Bovine).